The following is a 275-amino-acid chain: 4-deoxy-L-threo-5-hexosulose-uronate ketol-isomerase (275 aa).

H193, H195, E200, and H242 together coordinate Zn(2+).

It belongs to the KduI family. Zn(2+) is required as a cofactor.

The enzyme catalyses 5-dehydro-4-deoxy-D-glucuronate = 3-deoxy-D-glycero-2,5-hexodiulosonate. It participates in glycan metabolism; pectin degradation; 2-dehydro-3-deoxy-D-gluconate from pectin: step 4/5. Catalyzes the isomerization of 5-dehydro-4-deoxy-D-glucuronate to 3-deoxy-D-glycero-2,5-hexodiulosonate. The sequence is that of 4-deoxy-L-threo-5-hexosulose-uronate ketol-isomerase from Bacillus pumilus (strain SAFR-032).